Here is a 453-residue protein sequence, read N- to C-terminus: Glucose N-acetyltransferase 1-B (453 aa).

The Cytoplasmic portion of the chain corresponds to 1 to 8 (MLKRKVRY). The chain crosses the membrane as a helical; Signal-anchor for type II membrane protein span at residues 9 to 29 (LLLIVVVFTGIILSVEAIMRF). Topologically, residues 30-453 (QLNKNVDYYL…LESRAICQVN (424 aa)) are lumenal. N-linked (GlcNAc...) asparagine glycosylation is found at Asn108, Asn126, and Asn176. The short motif at 187-189 (DND) is the DXD element.

The protein belongs to the GNT1 family.

The protein resides in the golgi apparatus membrane. It is found in the vacuole membrane. Functionally, N-acetylglucosaminyltransferase involved in the Golgi-specific modification of N-linked glycans. The sequence is that of Glucose N-acetyltransferase 1-B (GNT1-B) from Kluyveromyces lactis (strain ATCC 8585 / CBS 2359 / DSM 70799 / NBRC 1267 / NRRL Y-1140 / WM37) (Yeast).